The chain runs to 275 residues: Phosphate import ATP-binding protein PstB 1 (275 aa).

One can recognise an ABC transporter domain in the interval 22 to 261 (IETRDLSVYY…DRTEKIFNSP (240 aa)). 54-61 (GPSGCGKS) contributes to the ATP binding site.

Belongs to the ABC transporter superfamily. Phosphate importer (TC 3.A.1.7) family. In terms of assembly, the complex is composed of two ATP-binding proteins (PstB), two transmembrane proteins (PstC and PstA) and a solute-binding protein (PstS).

The protein localises to the cell inner membrane. The catalysed reaction is phosphate(out) + ATP + H2O = ADP + 2 phosphate(in) + H(+). Its function is as follows. Part of the ABC transporter complex PstSACB involved in phosphate import. Responsible for energy coupling to the transport system. The protein is Phosphate import ATP-binding protein PstB 1 of Synechococcus sp. (strain JA-3-3Ab) (Cyanobacteria bacterium Yellowstone A-Prime).